The chain runs to 68 residues: MKLQEIKDFVKELRGLSQEELAKKENELKKELFELRFQAAAGQLEQTARLNEVKKQIARIKTVQSETK.

It belongs to the universal ribosomal protein uL29 family.

This chain is Large ribosomal subunit protein uL29, found in Streptococcus suis (strain 98HAH33).